The following is a 122-amino-acid chain: UPF0102 protein CKL_1410 (122 aa).

Belongs to the UPF0102 family.

In Clostridium kluyveri (strain ATCC 8527 / DSM 555 / NBRC 12016 / NCIMB 10680 / K1), this protein is UPF0102 protein CKL_1410.